A 404-amino-acid chain; its full sequence is N-acetylglucosamine-6-phosphate deacetylase (404 aa).

Glu143 is an a divalent metal cation binding site. A substrate-binding site is contributed by 154-155; sequence AH. Residues His211 and His232 each contribute to the a divalent metal cation site. Substrate contacts are provided by residues 235–236, Arg243, and 269–272; these read NA and DGIH. Residue Asp294 is the Proton donor/acceptor of the active site. 328-330 is a substrate binding site; that stretch reads LSG.

It belongs to the metallo-dependent hydrolases superfamily. NagA family. A divalent metal cation is required as a cofactor.

It carries out the reaction N-acetyl-D-glucosamine 6-phosphate + H2O = D-glucosamine 6-phosphate + acetate. It participates in amino-sugar metabolism; N-acetylneuraminate degradation. Its function is as follows. Hydrolyzes the N-glycolyl group from N-glycolylglucosamine 6-phosphate (GlcNGc-6-P) in the N-glycolylneuraminic acid (Neu5Gc) degradation pathway. In Danio rerio (Zebrafish), this protein is N-acetylglucosamine-6-phosphate deacetylase (amdhd2).